The following is a 106-amino-acid chain: Protein translation factor SUI1 homolog (106 aa).

The protein belongs to the SUI1 family.

The polypeptide is Protein translation factor SUI1 homolog (Methanopyrus kandleri (strain AV19 / DSM 6324 / JCM 9639 / NBRC 100938)).